Reading from the N-terminus, the 240-residue chain is Glutathione-independent glyoxalase hsp3102 (240 aa).

Residues Cys-141, His-142, and Glu-175 contribute to the active site.

It belongs to the peptidase C56 family. HSP31-like subfamily.

The protein localises to the cytoplasm. It localises to the nucleus. It carries out the reaction methylglyoxal + H2O = (R)-lactate + H(+). Functionally, catalyzes the conversion of methylglyoxal (MG) to D-lactate in a single glutathione (GSH)-independent step. May play a role in detoxifying endogenously produced glyoxals. Involved in protection against reactive oxygen species (ROS). The sequence is that of Glutathione-independent glyoxalase hsp3102 from Schizosaccharomyces pombe (strain 972 / ATCC 24843) (Fission yeast).